A 397-amino-acid polypeptide reads, in one-letter code: Tryptophan synthase beta chain (397 aa).

Residue Lys87 is modified to N6-(pyridoxal phosphate)lysine.

This sequence belongs to the TrpB family. As to quaternary structure, tetramer of two alpha and two beta chains. Pyridoxal 5'-phosphate serves as cofactor.

The catalysed reaction is (1S,2R)-1-C-(indol-3-yl)glycerol 3-phosphate + L-serine = D-glyceraldehyde 3-phosphate + L-tryptophan + H2O. It functions in the pathway amino-acid biosynthesis; L-tryptophan biosynthesis; L-tryptophan from chorismate: step 5/5. Its function is as follows. The beta subunit is responsible for the synthesis of L-tryptophan from indole and L-serine. The sequence is that of Tryptophan synthase beta chain from Citrobacter koseri (strain ATCC BAA-895 / CDC 4225-83 / SGSC4696).